We begin with the raw amino-acid sequence, 151 residues long: Flagellar assembly factor FliW (151 aa).

The protein belongs to the FliW family. Interacts with translational regulator CsrA and flagellin(s).

The protein resides in the cytoplasm. Its function is as follows. Acts as an anti-CsrA protein, binds CsrA and prevents it from repressing translation of its target genes, one of which is flagellin. Binds to flagellin and participates in the assembly of the flagellum. The chain is Flagellar assembly factor FliW from Natranaerobius thermophilus (strain ATCC BAA-1301 / DSM 18059 / JW/NM-WN-LF).